Here is a 1295-residue protein sequence, read N- to C-terminus: Nonribosomal peptide synthetase resC (1295 aa).

The tract at residues 1 to 24 (MDLTTTSHARVDSGGVPFTSSLND) is disordered. Positions 221–624 (KDVVDASPQA…EGRKDTQIKL (404 aa)) are adenylation. The region spanning 759-836 (ESANPAEENL…DQANLLRPLV (78 aa)) is the Carrier domain. Serine 796 carries the post-translational modification O-(pantetheine 4'-phosphoryl)serine. The segment at 873–1284 (EDVYPCTPYQ…DEYSQTLHEL (412 aa)) is condensation.

This sequence belongs to the NRP synthetase family. The cofactor is pantetheine 4'-phosphate.

The catalysed reaction is restrictinol + glycine + H(+) = restricticin + H2O. It functions in the pathway antifungal biosynthesis. In terms of biological role, nonribosomal peptide synthetase; part of the gene cluster that mediates the biosynthesis of the tetrahydropyranyl antifungal agent restricticin that acts as an inhibitor of CYP51 and blocks the ergosterol biosynthesis. Within the pathway, resC catalyzes the C3 esterification of restrictinol with glycine to yield restricticin. ResC represents an example of the emerging class of single-module NRPS-like enzymes that perform esterification reactions. The highly reducing polyketide synthase resH, the short chain dehydrogenase resG, the cyclase resF, the FAD-dependent monooxygenase resA and the enoylreductase resD are required to generate the first stable intermediate desmethylrestrictinol. ResH with resD biosynthesize the first polyketide chain intermediate that is reduced by resG, followed by epoxidation by resA before 6-endo cyclization via epoxide opening by resF leads to desmethylrestrictinol. The methyltransferase resE then catalyzes the C4 O-methylation of desmethylrestrictinol to produce restrictinol, and the nonribosomal peptide synthetase resC catalyzes the C3 esterification of restrictinol with glycine that leads to restricticin. The sequence is that of Nonribosomal peptide synthetase resC from Aspergillus sclerotiorum.